The sequence spans 113 residues: Large ribosomal subunit protein uL22 (113 aa).

Belongs to the universal ribosomal protein uL22 family. As to quaternary structure, part of the 50S ribosomal subunit.

In terms of biological role, this protein binds specifically to 23S rRNA; its binding is stimulated by other ribosomal proteins, e.g. L4, L17, and L20. It is important during the early stages of 50S assembly. It makes multiple contacts with different domains of the 23S rRNA in the assembled 50S subunit and ribosome. Its function is as follows. The globular domain of the protein is located near the polypeptide exit tunnel on the outside of the subunit, while an extended beta-hairpin is found that lines the wall of the exit tunnel in the center of the 70S ribosome. The chain is Large ribosomal subunit protein uL22 from Herpetosiphon aurantiacus (strain ATCC 23779 / DSM 785 / 114-95).